The chain runs to 177 residues: Thioredoxin M-type, chloroplastic (177 aa).

Residues 1-64 constitute a chloroplast transit peptide; sequence MAAFTCTSSP…SRLRRGGIIC (64 aa). A Thioredoxin domain is found at 65-177; sequence EAQDTATGIP…LATSIDKFLQ (113 aa). Active-site nucleophile residues include cysteine 101 and cysteine 104. The cysteines at positions 101 and 104 are disulfide-linked.

This sequence belongs to the thioredoxin family. Plant M-type subfamily. In terms of assembly, forms a complex with heterodimeric ferredoxin-thioredoxin reductase (FTR) and ferredoxin.

It localises to the plastid. It is found in the chloroplast. Functionally, participates in various redox reactions through the reversible oxidation of the active center dithiol to a disulfide. The M form is known to activate NADP-malate dehydrogenase. This is Thioredoxin M-type, chloroplastic from Brassica napus (Rape).